The following is a 490-amino-acid chain: Calcium-dependent protein kinase 12 (490 aa).

Residues 22–280 (YFLGQVLGQG…AHQVLCHPWI (259 aa)) enclose the Protein kinase domain. ATP contacts are provided by residues 28 to 36 (LGQGQFGTT) and K51. Catalysis depends on D146, which acts as the Proton acceptor. At S186 the chain carries Phosphoserine. Residues 286–316 (APDKPLDCAVVSRLKKFSAMNKLKKMALRVI) form an autoinhibitory domain region. EF-hand domains lie at 323 to 358 (EEIG…VGSE), 359 to 394 (LMES…LNKL), 395 to 430 (EREE…FGIN), and 434 to 464 (LDEM…GNGT). Ca(2+) is bound by residues D336, D338, S340, T342, E347, D372, D374, S376, T378, E383, D408, D410, S412, Y414, E419, D442, D444, D446, Q448, and E453.

This sequence belongs to the protein kinase superfamily. Ser/Thr protein kinase family. CDPK subfamily. In terms of assembly, interacts weakly with DI19. In terms of tissue distribution, ubiquitously expressed.

The enzyme catalyses L-seryl-[protein] + ATP = O-phospho-L-seryl-[protein] + ADP + H(+). The catalysed reaction is L-threonyl-[protein] + ATP = O-phospho-L-threonyl-[protein] + ADP + H(+). With respect to regulation, activated by calcium. Autophosphorylation may play an important role in the regulation of the kinase activity. May play a role in signal transduction pathways that involve calcium as a second messenger. The chain is Calcium-dependent protein kinase 12 (CPK12) from Arabidopsis thaliana (Mouse-ear cress).